The primary structure comprises 212 residues: Guanylate kinase (212 aa).

Residues 14–192 (GTALVICAPS…AYDELRATYL (179 aa)) enclose the Guanylate kinase-like domain. 21-28 (APSGTGKT) serves as a coordination point for ATP.

The protein belongs to the guanylate kinase family.

Its subcellular location is the cytoplasm. The catalysed reaction is GMP + ATP = GDP + ADP. Its function is as follows. Essential for recycling GMP and indirectly, cGMP. The chain is Guanylate kinase from Lawsonia intracellularis (strain PHE/MN1-00).